Consider the following 962-residue polypeptide: UvrABC system protein A (962 aa).

38–45 lines the ATP pocket; sequence GISGSGKS. ABC transporter domains follow at residues 319-597 and 617-944; these read WSKS…PDSL and PSGR…RFLR. An ATP-binding site is contributed by 649-656; the sequence is GVSGSGKS. A C4-type zinc finger spans residues 748–774; sequence CEACGGDGIIKIEMHFLADVYVPCEVC.

It belongs to the ABC transporter superfamily. UvrA family. In terms of assembly, forms a heterotetramer with UvrB during the search for lesions.

It is found in the cytoplasm. Functionally, the UvrABC repair system catalyzes the recognition and processing of DNA lesions. UvrA is an ATPase and a DNA-binding protein. A damage recognition complex composed of 2 UvrA and 2 UvrB subunits scans DNA for abnormalities. When the presence of a lesion has been verified by UvrB, the UvrA molecules dissociate. The polypeptide is UvrABC system protein A (Methanothermobacter thermautotrophicus (strain ATCC 29096 / DSM 1053 / JCM 10044 / NBRC 100330 / Delta H) (Methanobacterium thermoautotrophicum)).